The chain runs to 46 residues: Large ribosomal subunit protein bL34 (46 aa).

The tract at residues 25 to 46 (TASGRQVLRRRRAKGRYRLAVS) is disordered. Positions 31–46 (VLRRRRAKGRYRLAVS) are enriched in basic residues.

Belongs to the bacterial ribosomal protein bL34 family.

The polypeptide is Large ribosomal subunit protein bL34 (Synechococcus sp. (strain JA-3-3Ab) (Cyanobacteria bacterium Yellowstone A-Prime)).